Consider the following 79-residue polypeptide: Ketoisovalerate oxidoreductase subunit VorC (79 aa).

4Fe-4S ferredoxin-type domains lie at 4 to 33 and 40 to 70; these read AYPV…MSNK and HYVE…VHIE. Positions 13, 16, 19, 23, 49, 52, 55, and 59 each coordinate [4Fe-4S] cluster.

As to quaternary structure, heterotrimer of the VorA, VorB and VorC subunits. The cofactor is [4Fe-4S] cluster.

The enzyme catalyses 3-methyl-2-oxobutanoate + 2 oxidized [2Fe-2S]-[ferredoxin] + CoA = 2-methylpropanoyl-CoA + 2 reduced [2Fe-2S]-[ferredoxin] + CO2 + H(+). The chain is Ketoisovalerate oxidoreductase subunit VorC (vorC) from Methanothermobacter marburgensis (strain ATCC BAA-927 / DSM 2133 / JCM 14651 / NBRC 100331 / OCM 82 / Marburg) (Methanobacterium thermoautotrophicum).